Here is a 476-residue protein sequence, read N- to C-terminus: Glucan endo-1,3-beta-glucosidase 9 (476 aa).

The signal sequence occupies residues 1 to 25 (MARRLFLLLLAVTAGLSLTGTTVRA). Asn-88 and Asn-101 each carry an N-linked (GlcNAc...) asparagine glycan. Catalysis depends on Glu-122, which acts as the Proton donor. N-linked (GlcNAc...) asparagine glycans are attached at residues Asn-184, Asn-216, Asn-277, Asn-320, Asn-342, Asn-374, and Asn-405. Cys-364 and Cys-424 form a disulfide bridge. Ser-453 carries the GPI-anchor amidated serine lipid modification. Residues 454-476 (SSQTPNFFQSWPLLLLFLLSGLF) constitute a propeptide, removed in mature form.

This sequence belongs to the glycosyl hydrolase 17 family. In terms of processing, contains two additional disulfide bonds.

It localises to the secreted. Its subcellular location is the cell wall. The protein localises to the cell membrane. The enzyme catalyses Hydrolysis of (1-&gt;3)-beta-D-glucosidic linkages in (1-&gt;3)-beta-D-glucans.. In Arabidopsis thaliana (Mouse-ear cress), this protein is Glucan endo-1,3-beta-glucosidase 9.